Reading from the N-terminus, the 147-residue chain is Transcriptional regulator MraZ (147 aa).

SpoVT-AbrB domains are found at residues 5 to 51 and 80 to 123; these read GTPV…PQPV and ACDV…DSEK.

It belongs to the MraZ family. In terms of assembly, forms oligomers.

Its subcellular location is the cytoplasm. The protein resides in the nucleoid. The polypeptide is Transcriptional regulator MraZ (Nitrosospira multiformis (strain ATCC 25196 / NCIMB 11849 / C 71)).